Here is a 492-residue protein sequence, read N- to C-terminus: Protein KOKOPELLI (492 aa).

Disordered regions lie at residues 218–354 (VTSP…RNVM) and 394–426 (SKFHHKHQEKSKERKRPMSESKGLTTHKQQHQG). Acidic residues predominate over residues 256-270 (QETETFDDDSSETEA). The segment covering 287–305 (STSQEYSGETGSSSGSEWE) has biased composition (low complexity). Positions 317–336 (ESSYPPQNDDSVSEVSTSPP) are enriched in polar residues. Basic and acidic residues-rich tracts occupy residues 337 to 348 (HTDRDTSREPGK) and 403 to 412 (KSKERKRPMS).

As to expression, mostly expressed in pollen and open flowers and, to a lower extent, in closed flowers.

Positively regulates reproductive function by facilitating male gametophyte formation and double fertilization. This is Protein KOKOPELLI from Arabidopsis thaliana (Mouse-ear cress).